We begin with the raw amino-acid sequence, 360 residues long: Serine/threonine-protein kinase SRK2H (360 aa).

The 257-residue stretch at 4-260 (YEVVKDLGAG…LKEIKKHPWY (257 aa)) folds into the Protein kinase domain. Residues 10–18 (LGAGNFGVA) and K33 contribute to the ATP site. D123 acts as the Proton acceptor in catalysis. A disordered region spans residues 298–360 (EARNPAPSSN…AHSCQEPPKA (63 aa)). The span at 313–343 (DDDEEDVEDEVEEEEEEEEEEEEEEEEEEDE) shows a compositional bias: acidic residues. Residues 344–360 (YEKHVKEAHSCQEPPKA) are compositionally biased toward basic and acidic residues.

This sequence belongs to the protein kinase superfamily. Ser/Thr protein kinase family. In terms of tissue distribution, expressed in seedlings.

The enzyme catalyses L-seryl-[protein] + ATP = O-phospho-L-seryl-[protein] + ADP + H(+). It carries out the reaction L-threonyl-[protein] + ATP = O-phospho-L-threonyl-[protein] + ADP + H(+). In Arabidopsis thaliana (Mouse-ear cress), this protein is Serine/threonine-protein kinase SRK2H (SRK2H).